Consider the following 100-residue polypeptide: NADH-quinone oxidoreductase subunit K (100 aa).

Helical transmembrane passes span 1–21, 28–48, and 64–84; these read MIGL…GLAG, ILLL…GFVA, and FIIA…ILWF.

This sequence belongs to the complex I subunit 4L family. As to quaternary structure, NDH-1 is composed of 14 different subunits. Subunits NuoA, H, J, K, L, M, N constitute the membrane sector of the complex.

It is found in the cell inner membrane. It catalyses the reaction a quinone + NADH + 5 H(+)(in) = a quinol + NAD(+) + 4 H(+)(out). Its function is as follows. NDH-1 shuttles electrons from NADH, via FMN and iron-sulfur (Fe-S) centers, to quinones in the respiratory chain. The immediate electron acceptor for the enzyme in this species is believed to be ubiquinone. Couples the redox reaction to proton translocation (for every two electrons transferred, four hydrogen ions are translocated across the cytoplasmic membrane), and thus conserves the redox energy in a proton gradient. This chain is NADH-quinone oxidoreductase subunit K, found in Helicobacter pylori (strain Shi470).